A 352-amino-acid polypeptide reads, in one-letter code: Lipopolysaccharide core biosynthesis mannosyltransferase LpcC (352 aa).

The protein belongs to the glycosyltransferase group 1 family. Glycosyltransferase 4 subfamily.

Its pathway is bacterial outer membrane biogenesis; LPS core biosynthesis. Acts at transfer of mannose group to a 3-deoxy-D-mono octulonic acid (KDO) via an alpha-1,5 linkage. This is Lipopolysaccharide core biosynthesis mannosyltransferase LpcC (lpcC) from Rhizobium leguminosarum bv. viciae.